Reading from the N-terminus, the 134-residue chain is Large ribosomal subunit protein uL16c (134 aa).

The protein belongs to the universal ribosomal protein uL16 family. In terms of assembly, part of the 50S ribosomal subunit.

Its subcellular location is the plastid. It localises to the chloroplast. The sequence is that of Large ribosomal subunit protein uL16c from Pinus koraiensis (Korean pine).